The sequence spans 346 residues: fMet-Leu-Phe receptor (346 aa).

N-linked (GlcNAc...) asparagine glycans are attached at residues Asn-1 and Asn-7. The Extracellular portion of the chain corresponds to 1–24 (NSSLPTNISGGTPAVSAGYLFLDI). Residues 25–47 (ITYLVFAVTFVLGVLGNGLVIWV) form a helical membrane-spanning segment. Residues 48–58 (AGFRMTHTVTT) are Cytoplasmic-facing. The chain crosses the membrane as a helical span at residues 59 to 80 (ISYLNLAVADFCFTSTLPFFMV). Over 81–97 (RKAMGGHWPFGWFLCKF) the chain is Extracellular. Cys-95 and Cys-173 form a disulfide bridge. A helical membrane pass occupies residues 98–118 (IFTIVDINLFGSVFLIALIAL). Residues 119–137 (DRCVCVLHPVWTQNHRTVS) are Cytoplasmic-facing. A helical transmembrane segment spans residues 138–159 (LAKKVIIGPWVMALLLTLPVII). Residues 160-202 (RVTTVPGKTGTVACTFNFSPWTNDPKERINVAIAMLTVRGIIR) are Extracellular-facing. The chain crosses the membrane as a helical span at residues 203-223 (FIIGFSAPMSIVAVSYGLIAT). Residues 224–239 (KIHKQGLIKFSRPLRV) lie on the Cytoplasmic side of the membrane. The helical transmembrane segment at 240–263 (LSFVAAAFFLCWSPYQVVALIATV) threads the bilayer. Residues 264 to 282 (RIRELLQGMYKEIGIAVDV) lie on the Extracellular side of the membrane. A helical membrane pass occupies residues 283-302 (TSALAFFNSCLNPMLYVFMG). At 303-346 (QDFRERLIHALPASLERALTEDSTQTSDTATNSTLPSAEVALQA) the chain is on the cytoplasmic side. Positions 322-346 (TEDSTQTSDTATNSTLPSAEVALQA) are disordered. Residues 323–338 (EDSTQTSDTATNSTLP) are compositionally biased toward polar residues.

This sequence belongs to the G-protein coupled receptor 1 family. Phosphorylated; which is necessary for desensitization.

Its subcellular location is the cell membrane. Its function is as follows. High affinity receptor for N-formyl-methionyl peptides (fMLP), which are powerful neutrophil chemotactic factors. Binding of fMLP to the receptor stimulates intracellular calcium mobilization and superoxide anion release. This response is mediated via a G-protein that activates a phosphatidylinositol-calcium second messenger system. Receptor for TAFA4, mediates its effects on chemoattracting macrophages, promoting phagocytosis and increasing ROS release. Receptor for cathepsin CTSG, leading to increased phagocyte chemotaxis. This chain is fMet-Leu-Phe receptor (FPR1), found in Pan troglodytes (Chimpanzee).